The following is an 818-amino-acid chain: H(+)/Cl(-) exchange transporter 3 (818 aa).

Residues 1 to 125 (MESEQLFHRG…WEMTKSLYDA (125 aa)) lie on the Cytoplasmic side of the membrane. 3 consecutive short sequence motifs (di-leucine internalization motif; mediates targeting to late endosome and lysosome membranes) follow at residues 28–29 (LL), 46–47 (LL), and 71–75 (LLDLL). A helical membrane pass occupies residues 126 to 163 (WSGWLVVTLTGLASGALAGLIDIAADWMTDLKEGICLS). N177 carries N-linked (GlcNAc...) asparagine glycosylation. The helical transmembrane segment at 209–232 (MNYIMYIFWALSFAFLAVSLVKVF) threads the bilayer. The Selectivity filter part_1 signature appears at 238 to 242 (GSGIP). A chloride-binding site is contributed by S239. An intramembrane region (helical) is located at residues 241-248 (IPEIKTIL). 2 helical membrane passes run 258–276 (GKWTLMIKTITLVLAVASG) and 282–301 (EGPLVHVACCCGNIFSYLFP). A Selectivity filter part_2 motif is present at residues 280–284 (GKEGP). 2 consecutive intramembrane regions (helical) follow at residues 313–325 (VLSAASAAGVSVA) and 329–337 (PIGGVLFSL). 3 consecutive transmembrane segments (helical) span residues 349–367 (LWRSFFAALVAAFVLRSIN), 391–416 (FPFILLGVFGGLWGAFFIRANIAWCR), and 423–443 (FGKYPVLEVIIVAAITAVIAF). Residues N451 and N479 are each glycosylated (N-linked (GlcNAc...) asparagine). 2 helical membrane-spanning segments follow: residues 500–520 (IWQLCLALIFKIIMTVFTFGI) and 525–544 (GLFIPSMAIGAIAGRIVGIA). Residues 525–529 (GLFIP) carry the Selectivity filter part_3 motif. F527 serves as a coordination point for chloride. 2 intramembrane regions (helical) span residues 572–586 (GLYAMVGAAACLGGV) and 590–601 (TVSLVVIVFELT). Residues 602-605 (GGLE) constitute an intramembrane region (note=Loop between two helices). Residues 606 to 624 (YIVPLMAAVMTSKWVGDAF) form a helical membrane-spanning segment. Topologically, residues 625–818 (GREGIYEAHI…NQDPASIMFN (194 aa)) are cytoplasmic. Residue Y630 coordinates chloride. CBS domains lie at 658–722 (MRPR…ARKK) and 755–812 (LDMS…NQDP). Residues 689-691 (YNG) and 796-799 (TKKD) contribute to the ATP site.

It belongs to the chloride channel (TC 2.A.49) family. ClC-3/CLCN3 subfamily. In terms of assembly, monomer and homodimer. Forms heterodimers with CLCN4. N-glycosylated. As to expression, abundant in brain, especially in the olfactory bulb, hippocampus, and cerebellum. A moderate expression is seen in the lung, kidney and adrenal gland.

It localises to the lysosome membrane. Its subcellular location is the late endosome membrane. The protein resides in the cell membrane. It is found in the early endosome membrane. Its function is as follows. Strongly outwardly rectifying, electrogenic H(+)/Cl(-)exchanger which mediates the exchange of chloride ions against protons. The CLC channel family contains both chloride channels and proton-coupled anion transporters that exchange chloride or another anion for protons. The presence of conserved gating glutamate residues is typical for family members that function as antiporters. Functionally, strongly outwardly rectifying, electrogenic H(+)/Cl(-)exchanger which mediates the exchange of chloride ions against protons. May play an important role in neuronal cell function through regulation of membrane excitability by protein kinase C. It could help neuronal cells to establish short-term memory. This chain is H(+)/Cl(-) exchange transporter 3 (Clcn3), found in Rattus norvegicus (Rat).